We begin with the raw amino-acid sequence, 650 residues long: Acetyl-coenzyme A synthetase (650 aa).

CoA contacts are provided by residues 191-194 (RGGR), Thr311, and Asn335. Residues 387 to 389 (GEP), 411 to 416 (DTWWQT), Asp500, and Arg515 contribute to the ATP site. Ser523 contacts CoA. Arg526 is an ATP binding site. Mg(2+) is bound by residues Val537, His539, and Val542. A CoA-binding site is contributed by Arg584. N6-acetyllysine is present on Lys609.

This sequence belongs to the ATP-dependent AMP-binding enzyme family. Mg(2+) is required as a cofactor. In terms of processing, acetylated. Deacetylation by the SIR2-homolog deacetylase activates the enzyme.

It carries out the reaction acetate + ATP + CoA = acetyl-CoA + AMP + diphosphate. In terms of biological role, catalyzes the conversion of acetate into acetyl-CoA (AcCoA), an essential intermediate at the junction of anabolic and catabolic pathways. AcsA undergoes a two-step reaction. In the first half reaction, AcsA combines acetate with ATP to form acetyl-adenylate (AcAMP) intermediate. In the second half reaction, it can then transfer the acetyl group from AcAMP to the sulfhydryl group of CoA, forming the product AcCoA. This Shewanella baltica (strain OS155 / ATCC BAA-1091) protein is Acetyl-coenzyme A synthetase.